The sequence spans 434 residues: MYGRGSGAEHSRGSGAEHFWDPRPEASSTVSSSLRPPSGARDLLPREVQRREKLEAQLTRVFRRHGYQRIITPTLERLETLLAGGSIRAESVLQLRDGEGTMLGLRPEFTASIVRAAATRLAGGPLPLRLYYHGSVFRNSRREEGSYSSQEFFQSGVELIGAGGWLADAEILLLLADCIRSVGISSCEFSWTLLLGDVSLTESLLSAVAPTAQAAVRRAIAQLDYVYLESAPLPEAARQIGLQILGLRGQPGSVLSDLAQLPVPPERLRDLRQLCQVLEEHGVRVVLDLSLLQTLAYYTGIVFQAVASGEIIALGGRYDRLYALYSPQQVEQPGIGFTLLPDTLLRLLPPDPQTEEMGCKRLVVPLVPAGIPAALALAARWREECTAPLTRTEAVELELLDRAPEEIEAYARQCRIPEIAWVQADGSYHITHPG.

The interval 1–48 is disordered; sequence MYGRGSGAEHSRGSGAEHFWDPRPEASSTVSSSLRPPSGARDLLPREV. The span at 27–38 shows a compositional bias: low complexity; that stretch reads SSTVSSSLRPPS.

It belongs to the class-II aminoacyl-tRNA synthetase family. HisZ subfamily. In terms of assembly, heteromultimer composed of HisG and HisZ subunits.

The protein resides in the cytoplasm. It functions in the pathway amino-acid biosynthesis; L-histidine biosynthesis; L-histidine from 5-phospho-alpha-D-ribose 1-diphosphate: step 1/9. In terms of biological role, required for the first step of histidine biosynthesis. May allow the feedback regulation of ATP phosphoribosyltransferase activity by histidine. The polypeptide is ATP phosphoribosyltransferase regulatory subunit (Synechococcus sp. (strain JA-2-3B'a(2-13)) (Cyanobacteria bacterium Yellowstone B-Prime)).